A 678-amino-acid chain; its full sequence is Penicillin-binding protein activator LpoA (678 aa).

The first 26 residues, 1-26, serve as a signal peptide directing secretion; it reads MVPSTFSRLKAARCLPVVLAALIFAG. C27 carries the N-palmitoyl cysteine lipid modification. C27 carries S-diacylglycerol cysteine lipidation. The span at 300 to 310 shows a compositional bias: low complexity; sequence AADVAEQPQPQ. 2 disordered regions span residues 300 to 340 and 496 to 528; these read AADV…PVSA and ALTG…DDQF. A compositionally biased stretch (polar residues) spans 311–327; it reads TADSVASPAQASVSDLT. Composition is skewed to low complexity over residues 330 to 340 and 513 to 528; these read QPAAQPVPVSA and TTNN…DDQF.

Belongs to the LpoA family. Interacts with PBP1a.

It is found in the cell outer membrane. Its function is as follows. Regulator of peptidoglycan synthesis that is essential for the function of penicillin-binding protein 1A (PBP1a). The protein is Penicillin-binding protein activator LpoA of Shigella flexneri serotype X (strain 2002017).